Here is a 1243-residue protein sequence, read N- to C-terminus: MSGGGEQPDILSVGILVKERWKVLRKIGGGGFGEIYDALDMLTRENVALKVESAQQPKQVLKMEVAVLKKLQGKDHVCRFIGCGRNDRFNYVVMQLQGRNLADLRRSQSRGTFTISTTLRLGKQILESIESIHSVGFLHRDIKPSNFAMGRFPSTCRKCFMLDFGLARQFTNSCGDVRPPRAVAGFRGTVRYASINAHRNREMGRHDDLWSLFYMLVEFVVGQLPWRKIKDKEQVGSIKERYDHRLMLKHLPPEFSTFLDHISSLDYFTKPDYQLLTSVFDNSIKTFGVIESDPFDWEKSGTDGSLTTTTTSATPQLHTRLTPAAIGIANATPIPGDLLRENTDEVFPDEQLSDGENGIPVGVSPDKLPGSLGHPRPQEKDVWEEMDINKNKIKLGICKAATEEENSHGQVNGILNAPSLGSPIRVRSEITQPDRDVPLVRKLRSIHSFELEKRLTLEPKPDTDKFLETCMEKMQKDSSAGKEPVPPALPHKPCVPVVTHTDHIWHYDDEYLPDASKPASANTPEQADGGGSNGFIAVNLSSCKQEVDSKEWVIVDKEQDLQDFRTNEVLGHKTTGSPSDEEPEVLQVLEGSPQDEKIQVGPWTDNHHLKKESSGVVLALSAECPATAASELYTDRLDLQAGAASQFITVTPTSPMEAQAEGPLTAITIPRPSVASTQSTSGSFHYGPQPEKKDLQPLEPTVELYSPRENFSGLVVTEGELASGGSRVDLGLQIDHTGHDMLPNMRDGDTSQDLGPKDPPDHNRLAVKEFEHLPGETEERSLLLGSENEDERLSKGQHCIEVSSPGELVTAERAQLAATEPLHVSETQNCSVLPNQDKTHEIMKLLAVGTSEISPQAIDPHAEGQIGQMAAMQKNKLFKDDGIQSESLPRQQGDLSAFLHQEGKREKVVPRNGELYHCVSENEHGPPTRKDMLRSSFVTRHSRIPVLAQEIDSTFESSSAISAKEKLLQKKAYQPEIVKLLVEKRQFKSFLGDLSSASDKLIEEKLAAVPVPFSEEEVFAPFSRLAADSHLSRSVEDSFLSPIISQARKSKIPRPVSWVSTDQINGSASPQFLPRPPPGKPPVRPGVEARLRRYKVLGSSNSDSDLFSRLAQILQNGSQKSRSTTQCKSPGSPHNPKTPPKSPVVPRRSPSASPRSSSLPRTSSSSPSRAGRPHHDQRSSSPHLGRSKSPPSHSGSSSSRRSCQQEHCKPSKNGPKGSGSLHHHSTSSKTPPGKSKPASKLSR.

The Protein kinase domain maps to 21–284 (WKVLRKIGGG…LLTSVFDNSI (264 aa)). ATP is bound by residues 27-35 (IGGGGFGEI) and Lys50. Catalysis depends on Asp141, which acts as the Proton acceptor. Ser445 carries the phosphoserine modification. Residues 674–683 (VASTQSTSGS) show a composition bias toward polar residues. Disordered stretches follow at residues 674 to 695 (VAST…KKDL) and 737 to 761 (TGHD…DPPD). The residue at position 786 (Ser786) is a Phosphoserine. The interval 1063–1086 (QINGSASPQFLPRPPPGKPPVRPG) is disordered. The span at 1073–1084 (LPRPPPGKPPVR) shows a compositional bias: pro residues. A Phosphoserine modification is found at Ser1102. The segment covering 1115-1129 (QNGSQKSRSTTQCKS) has biased composition (polar residues). Residues 1115-1243 (QNGSQKSRST…KSKPASKLSR (129 aa)) form a disordered region. 3 stretches are compositionally biased toward low complexity: residues 1144–1170 (VVPR…PSRA), 1187–1202 (SKSP…SRRS), and 1227–1243 (SSKT…KLSR).

It belongs to the protein kinase superfamily. CK1 Ser/Thr protein kinase family. As to quaternary structure, interacts with CEP164. Interacts with MCRS1; the interaction is required for recruitment of TTBK2 to the mother centriole.

The protein localises to the cell projection. It is found in the cilium. It localises to the cytoplasm. Its subcellular location is the cytoskeleton. The protein resides in the cilium basal body. The protein localises to the microtubule organizing center. It is found in the centrosome. It localises to the centriole. Its subcellular location is the cytosol. The protein resides in the nucleus. The catalysed reaction is L-seryl-[protein] + ATP = O-phospho-L-seryl-[protein] + ADP + H(+). It catalyses the reaction L-threonyl-[protein] + ATP = O-phospho-L-threonyl-[protein] + ADP + H(+). Functionally, serine/threonine kinase that acts as a key regulator of ciliogenesis: controls the initiation of ciliogenesis by binding to the distal end of the basal body and promoting the removal of CCP110, which caps the mother centriole, leading to the recruitment of IFT proteins, which build the ciliary axoneme. Has some substrate preference for proteins that are already phosphorylated on a Tyr residue at the +2 position relative to the phosphorylation site. Able to phosphorylate tau on serines in vitro. Phosphorylates MPHOSPH9 which promotes its ubiquitination and proteasomal degradation, loss of MPHOSPH9 facilitates the removal of the CP110-CEP97 complex (a negative regulator of ciliogenesis) from the mother centrioles, promoting the initiation of ciliogenesis. Required for recruitment of CPLANE2 and INTU to the mother centriole. This Mus musculus (Mouse) protein is Tau-tubulin kinase 2 (Ttbk2).